A 196-amino-acid polypeptide reads, in one-letter code: Large ribosomal subunit protein bL25 (196 aa).

Belongs to the bacterial ribosomal protein bL25 family. CTC subfamily. In terms of assembly, part of the 50S ribosomal subunit; part of the 5S rRNA/L5/L18/L25 subcomplex. Contacts the 5S rRNA. Binds to the 5S rRNA independently of L5 and L18.

This is one of the proteins that binds to the 5S RNA in the ribosome where it forms part of the central protuberance. The polypeptide is Large ribosomal subunit protein bL25 (Treponema pallidum subsp. pallidum (strain SS14)).